A 358-amino-acid chain; its full sequence is Low-specificity L-threonine aldolase 1 (358 aa).

N6-(pyridoxal phosphate)lysine is present on Lys-207.

It belongs to the threonine aldolase family. The cofactor is pyridoxal 5'-phosphate. As to expression, expressed in root tips, seedlings, carpels and seeds.

It carries out the reaction L-threonine = acetaldehyde + glycine. It catalyses the reaction L-allo-threonine = acetaldehyde + glycine. Its pathway is amino-acid degradation; L-threonine degradation via aldolase pathway; acetaldehyde and glycine from L-threonine: step 1/1. Functionally, threonine aldolase involved in threonine degradation to glycine. May play a role in the removal of L-allo-threonine. This chain is Low-specificity L-threonine aldolase 1, found in Arabidopsis thaliana (Mouse-ear cress).